A 476-amino-acid chain; its full sequence is Aspartyl/glutamyl-tRNA(Asn/Gln) amidotransferase subunit B (476 aa).

Belongs to the GatB/GatE family. GatB subfamily. As to quaternary structure, heterotrimer of A, B and C subunits.

The catalysed reaction is L-glutamyl-tRNA(Gln) + L-glutamine + ATP + H2O = L-glutaminyl-tRNA(Gln) + L-glutamate + ADP + phosphate + H(+). It catalyses the reaction L-aspartyl-tRNA(Asn) + L-glutamine + ATP + H2O = L-asparaginyl-tRNA(Asn) + L-glutamate + ADP + phosphate + 2 H(+). Allows the formation of correctly charged Asn-tRNA(Asn) or Gln-tRNA(Gln) through the transamidation of misacylated Asp-tRNA(Asn) or Glu-tRNA(Gln) in organisms which lack either or both of asparaginyl-tRNA or glutaminyl-tRNA synthetases. The reaction takes place in the presence of glutamine and ATP through an activated phospho-Asp-tRNA(Asn) or phospho-Glu-tRNA(Gln). This is Aspartyl/glutamyl-tRNA(Asn/Gln) amidotransferase subunit B from Variovorax paradoxus (strain S110).